A 371-amino-acid polypeptide reads, in one-letter code: Cytochrome b (371 aa).

Helical transmembrane passes span 25 to 45 (FGSLLLTCLMLQILTGFFLAI), 69 to 90 (WIMQNTHAIGASLFFICIYTHI), 105 to 125 (WLSGTTLLIILMATAFFGYVL), and 170 to 190 (FFALHFILPFIIISMSSIHII). 2 residues coordinate heme b: histidine 75 and histidine 89. Heme b-binding residues include histidine 174 and histidine 188. Histidine 193 contacts a ubiquinone. The next 4 membrane-spanning stretches (helical) occupy residues 218 to 238 (YKDMTMVSIMIMLLLMVMTFA), 280 to 300 (LGGTLALFLSIIILTTTPFTH), 312 to 332 (LTQILFWTLIATFTTITWTAT), and 339 to 358 (FIYISQMTSIMYFSFFIMNP).

The protein belongs to the cytochrome b family. In terms of assembly, the cytochrome bc1 complex contains 3 respiratory subunits (MT-CYB, CYC1 and UQCRFS1), 2 core proteins (UQCRC1 and UQCRC2) and probably 6 low-molecular weight proteins. Heme b is required as a cofactor.

It localises to the mitochondrion inner membrane. Component of the ubiquinol-cytochrome c reductase complex (complex III or cytochrome b-c1 complex) that is part of the mitochondrial respiratory chain. The b-c1 complex mediates electron transfer from ubiquinol to cytochrome c. Contributes to the generation of a proton gradient across the mitochondrial membrane that is then used for ATP synthesis. This is Cytochrome b (MT-CYB) from Micruroides euryxanthus (Sonoran coral snake).